The sequence spans 964 residues: Glycine dehydrogenase (decarboxylating) (964 aa).

Polar residues predominate over residues 1-11 (MNSTLQNQTKT). The disordered stretch occupies residues 1–21 (MNSTLQNQTKTNLEKVGTDPL). Lys-713 carries the N6-(pyridoxal phosphate)lysine modification.

It belongs to the GcvP family. The glycine cleavage system is composed of four proteins: P, T, L and H. Pyridoxal 5'-phosphate serves as cofactor.

It catalyses the reaction N(6)-[(R)-lipoyl]-L-lysyl-[glycine-cleavage complex H protein] + glycine + H(+) = N(6)-[(R)-S(8)-aminomethyldihydrolipoyl]-L-lysyl-[glycine-cleavage complex H protein] + CO2. Its function is as follows. The glycine cleavage system catalyzes the degradation of glycine. The P protein binds the alpha-amino group of glycine through its pyridoxal phosphate cofactor; CO(2) is released and the remaining methylamine moiety is then transferred to the lipoamide cofactor of the H protein. The protein is Glycine dehydrogenase (decarboxylating) of Leptospira interrogans serogroup Icterohaemorrhagiae serovar copenhageni (strain Fiocruz L1-130).